The sequence spans 616 residues: Auxin efflux carrier component 4 (616 aa).

Over 1 to 7 (MITWHDL) the chain is Extracellular. Residues 8 to 28 (YTVLTAVVPLYVAMILAYGSV) traverse the membrane as a helical segment. The Cytoplasmic segment spans residues 29-38 (QWWKIFSPDQ). The helical transmembrane segment at 39–59 (CSGINRFVAIFAVPLLSFHFI) threads the bilayer. Residue valine 51 participates in (indol-3-yl)acetate binding. Over 60–70 (STNDPYAMNFR) the chain is Extracellular. Residues 71–91 (FVAADTLQKIIMLVLLALWAN) traverse the membrane as a helical segment. Over 92–101 (LTKNGSLEWM) the chain is Cytoplasmic. Residues 102 to 122 (ITIFSLSTLPNTLVMGIPLLI) traverse the membrane as a helical segment. (indol-3-yl)acetate is bound by residues asparagine 112 and leucine 114. Over 123–131 (AMYGTYAGS) the chain is Extracellular. The chain crosses the membrane as a helical span at residues 132–152 (LMVQVVVLQCIIWYTLLLFLF). Position 145 (tyrosine 145) interacts with (indol-3-yl)acetate. The Cytoplasmic portion of the chain corresponds to 153–476 (EYRGAKLLIM…LIRNPNTYSS (324 aa)). 3 positions are modified to phosphoserine: serine 223, serine 240, and serine 280. The interval 302–343 (AAGSYPAPNPEFSTGTGVSTKPNKIPKENQQQLQEKDSKASH) is disordered. The segment covering 312–334 (EFSTGTGVSTKPNKIPKENQQQL) has biased composition (polar residues). Phosphoserine occurs at positions 358 and 395. The segment at 390-411 (DQPRKSNARGGGDDIGGLDSGE) is disordered. Residues 398–409 (RGGGDDIGGLDS) show a composition bias toward gly residues. The helical transmembrane segment at 477–497 (LIGLIWALVAYRWHVAMPKIL) threads the bilayer. Residues 498 to 500 (QQS) lie on the Extracellular side of the membrane. Residues 501–521 (ISILSDAGLGMAMFSLGLFMA) traverse the membrane as a helical segment. The Cytoplasmic portion of the chain corresponds to 522–535 (LQPKIIACGNSVAT). The chain crosses the membrane as a helical span at residues 536 to 556 (FAMAVRFITGPAIMAVAGIAI). The Extracellular portion of the chain corresponds to 557 to 561 (GLHGD). Residues 562–582 (LLRIAIVQAALPQGIVPFVFA) form a helical membrane-spanning segment. (indol-3-yl)acetate is bound by residues isoleucine 576 and valine 577. Residues 583–595 (KEYNVHPTILSTG) are Cytoplasmic-facing. Residues 596–616 (VIFGMLIALPITLVYYILLGL) traverse the membrane as a helical segment.

This sequence belongs to the auxin efflux carrier (TC 2.A.69.1) family. As to quaternary structure, homodimer. As to expression, expressed in the quiescent center precursors and surrounding cells. Present in columella cells of primary roots. Detected in pollen.

It is found in the cell membrane. Acts as a component of the auxin efflux carrier. Plays a role in generating a sink for auxin into columella cells. Maintains the endogenous auxin gradient, which is essential for correct root patterning. Involved in EXO70A3-regulated gravitropic responses in columella cells and in root system architecture (RSA). Together with PIN3 and PIN7, involved in the connective auxin transport (CAT) that ensures communication across the shoot system, and modulates strigolactone-mediated shoot branching control. The abcb19 pin3 pin4 pin7 quadruple mutant exhibits an additive phenotype on strigolactone-mediated bud outgrowth responses and shoot branching control. This chain is Auxin efflux carrier component 4, found in Arabidopsis thaliana (Mouse-ear cress).